Reading from the N-terminus, the 528-residue chain is MDMTKTVEEKKTNGTDSVKGVFENSTIPKVPTGQEMGGDGSSTSKLKETLKVADQTPLSVDNGAKSKLDSSDRQVPGVADQTPLSVDNGAKSKLDSSDRQVPGPELKPNVKKSKKKRIQKPAQPSGPNDLKGGTKGSSQVGENVSENYTGISKEAAKQKQKTPKSVKMQSNLADKFKANDTRRSELINKFQQFVHETCLKSDFEYTGRQYFRARSNFFEMIKLASLYDKHLKECMARACTLERERLKRKLLLVRALKPAVDFLTGIISGVPGSGKSTIVRTLLKGEFPAVCALANPALMNDYSGIEGVYGLDDLLLSAVPITSDLLIIDEYTLAESAEILLLQRRLRASMVLLVGDVAQGKATTASSIEYLTLPVIYRSETTYRLGQETASLCSKQGNRMVSKGGRDTVIITDYDGETDETEKNIAFTVDTVRDVKDCGYDCALAIDVQGKEFDSVTLFLRNEDRKALADKHLRLVALSRHKSKLIIRADAEIRQAFLTGDIDLSSKASNSHRYSAKPDEDHSWFKAK.

Residues Met-1–Asn-13 are compositionally biased toward basic and acidic residues. The segment at Met-1–Asn-143 is disordered. Tandem repeats lie at residues Val-52–Gly-77 and Val-78–Gly-103. The segment at Val-52 to Gly-103 is 2 X 26 AA tandem repeats. Residues Val-75 to Ala-491 are interaction with the suppressor of RNA silencing Gamma-B. The span at Asn-109 to Gln-119 shows a compositional bias: basic residues. The segment at Lys-111 to Lys-120 is nucleolar localization signal. In terms of domain architecture, (+)RNA virus helicase ATP-binding spans Ala-236–Ser-379. The tract at residues Arg-243–Arg-254 is nuclear localization signal. Gly-269 to Ser-276 is a binding site for ATP. Positions Glu-380 to Glu-520 constitute a (+)RNA virus helicase C-terminal domain. The disordered stretch occupies residues Ala-508 to Lys-528. Positions Ala-516–Lys-528 are enriched in basic and acidic residues.

It belongs to the virgaviridae/benyvirus TGB1 movement protein family. Homooligomer. Interacts with movement protein TGB3. TGB1-TGB3-TGB2 complex formation is enhanced by ATP hydrolysis. Interacts with the suppressor of RNA silencing Gamma-B (via N-terminus). It depends on Mg(2+) as a cofactor.

The protein localises to the host cell junction. It localises to the host plasmodesma. The protein resides in the host nucleus. It is found in the host cytoplasm. Its subcellular location is the host nucleolus. The protein localises to the host cytoskeleton. The catalysed reaction is ATP + H2O = ADP + phosphate + H(+). Its activity is regulated as follows. ATPase activity is enhanced by the suppressor of RNA silencing Gamma-B. In terms of biological role, participates in the transport of viral genome to neighboring plant cells directly through plasmodesmata, without any budding. Multifunctional movement protein with RNA-binding, ATPase and helicase activities. Engages in homologous interactions leading to the formation of a ribonucleoprotein complex containing plus-sense viral RNAs (vRNPs). ATPase activity is probably required for vRNPs movement complex assembly. Intracellular delivery of TGBp1-containing vRNPs to plasmodesmata is facilitated by TGBp2 and TGBp3. The sequence is that of Movement protein TGB1 from Barley stripe mosaic virus (BSMV).